Consider the following 130-residue polypeptide: Small ribosomal subunit protein uS8 (130 aa).

The protein belongs to the universal ribosomal protein uS8 family. Part of the 30S ribosomal subunit. Contacts proteins S5 and S12.

Its function is as follows. One of the primary rRNA binding proteins, it binds directly to 16S rRNA central domain where it helps coordinate assembly of the platform of the 30S subunit. The protein is Small ribosomal subunit protein uS8 of Buchnera aphidicola subsp. Schizaphis graminum (strain Sg).